The primary structure comprises 468 residues: MTKTLPKDFIFGGATAAYQAEGATHTDGKGPVAWDKYLEDNYWYTAEPASDFYNRYPVDLKLSEEFGVNGIRISIAWSRIFPTGKGEVNPKGVEYYHNLFAECHKRHVEPFVTLHHFDTPEALHSDGDFLNRENIEHFVNYAEFCFKEFSEVNYWTTFNEIGPIGDGQYLVGKFPPGIQYDLAKVFQSHHNMMVSHARAVKLFKDSGYSGEIGVVHALPTKYPFDANNPDDVRAAELEDIIHNKFILDATYLGKYSDKTMEGVNHILEVNGGELDLREEDFAALDAAKDLNDFLGINYYMSDWMQAFDGETEIIHNGKGEKGSSKYQIKGVGRRKAPVDVPKTDWDWIIFPQGLYDQIMRVKADYPNYKKIYITENGLGYKDEFVDNTVYDDGRIDYVKKHLEVISDAISDGVNVKGYFMWSLMDVFSWSNGYEKRYGLFYVDFETQERYPKKSAYWYKKVAETQVIE.

Residues glutamine 19, histidine 116, asparagine 159, glutamate 160, and asparagine 297 each coordinate D-galactose 6-phosphate. Glutamate 160 acts as the Proton donor in catalysis. Catalysis depends on glutamate 375, which acts as the Nucleophile. The D-galactose 6-phosphate site is built by serine 428, tryptophan 429, lysine 435, and tyrosine 437.

The protein belongs to the glycosyl hydrolase 1 family.

The enzyme catalyses a 6-phospho-beta-D-galactoside + H2O = D-galactose 6-phosphate + an alcohol. It participates in carbohydrate metabolism; lactose degradation; D-galactose 6-phosphate and beta-D-glucose from lactose 6-phosphate: step 1/1. In Streptococcus pyogenes serotype M3 (strain ATCC BAA-595 / MGAS315), this protein is 6-phospho-beta-galactosidase.